We begin with the raw amino-acid sequence, 413 residues long: Arginine biosynthesis bifunctional protein ArgJ (413 aa).

Residues T158, K184, T195, E285, N408, and S413 each coordinate substrate. The active-site Nucleophile is the T195.

It belongs to the ArgJ family. In terms of assembly, heterotetramer of two alpha and two beta chains.

The protein resides in the cytoplasm. The catalysed reaction is N(2)-acetyl-L-ornithine + L-glutamate = N-acetyl-L-glutamate + L-ornithine. It carries out the reaction L-glutamate + acetyl-CoA = N-acetyl-L-glutamate + CoA + H(+). The protein operates within amino-acid biosynthesis; L-arginine biosynthesis; L-ornithine and N-acetyl-L-glutamate from L-glutamate and N(2)-acetyl-L-ornithine (cyclic): step 1/1. Its pathway is amino-acid biosynthesis; L-arginine biosynthesis; N(2)-acetyl-L-ornithine from L-glutamate: step 1/4. Functionally, catalyzes two activities which are involved in the cyclic version of arginine biosynthesis: the synthesis of N-acetylglutamate from glutamate and acetyl-CoA as the acetyl donor, and of ornithine by transacetylation between N(2)-acetylornithine and glutamate. The sequence is that of Arginine biosynthesis bifunctional protein ArgJ from Bradyrhizobium diazoefficiens (strain JCM 10833 / BCRC 13528 / IAM 13628 / NBRC 14792 / USDA 110).